We begin with the raw amino-acid sequence, 154 residues long: Prefoldin subunit alpha (154 aa).

Over residues 92-102 the composition is skewed to polar residues; sequence DNAVESLSTKQ. Positions 92-154 are disordered; that stretch reads DNAVESLSTK…MQDQQPEDNE (63 aa). Residues 103 to 114 are compositionally biased toward basic and acidic residues; that stretch reads DALDNRIESLRD. A compositionally biased stretch (low complexity) spans 128–148; it reads QQAQQMQQQMQQQQMQQMQDQ.

The protein belongs to the prefoldin subunit alpha family. As to quaternary structure, heterohexamer of two alpha and four beta subunits.

Its subcellular location is the cytoplasm. Functionally, molecular chaperone capable of stabilizing a range of proteins. Seems to fulfill an ATP-independent, HSP70-like function in archaeal de novo protein folding. This is Prefoldin subunit alpha from Haloquadratum walsbyi (strain DSM 16790 / HBSQ001).